Consider the following 104-residue polypeptide: Phosphoribosyl-ATP pyrophosphatase (104 aa).

It belongs to the PRA-PH family.

The protein resides in the cytoplasm. It carries out the reaction 1-(5-phospho-beta-D-ribosyl)-ATP + H2O = 1-(5-phospho-beta-D-ribosyl)-5'-AMP + diphosphate + H(+). The protein operates within amino-acid biosynthesis; L-histidine biosynthesis; L-histidine from 5-phospho-alpha-D-ribose 1-diphosphate: step 2/9. In Streptococcus thermophilus (strain ATCC BAA-491 / LMD-9), this protein is Phosphoribosyl-ATP pyrophosphatase.